A 78-amino-acid chain; its full sequence is Defensin-like protein 287 (78 aa).

Residues 1-24 (MNNLRVIMSVLLAVLVFTATVSES) form the signal peptide. Intrachain disulfides connect cysteine 39–cysteine 59, cysteine 45–cysteine 64, and cysteine 51–cysteine 66.

The protein belongs to the DEFL family.

It is found in the secreted. The polypeptide is Defensin-like protein 287 (Arabidopsis thaliana (Mouse-ear cress)).